A 186-amino-acid polypeptide reads, in one-letter code: tRNA (cytidine(56)-2'-O)-methyltransferase (186 aa).

Residues L84 and 110–114 (GAEKV) each bind S-adenosyl-L-methionine.

This sequence belongs to the aTrm56 family. As to quaternary structure, homodimer.

The protein localises to the cytoplasm. The enzyme catalyses cytidine(56) in tRNA + S-adenosyl-L-methionine = 2'-O-methylcytidine(56) in tRNA + S-adenosyl-L-homocysteine + H(+). Functionally, specifically catalyzes the AdoMet-dependent 2'-O-ribose methylation of cytidine at position 56 in tRNAs. This Staphylothermus marinus (strain ATCC 43588 / DSM 3639 / JCM 9404 / F1) protein is tRNA (cytidine(56)-2'-O)-methyltransferase.